The chain runs to 289 residues: MHYHQLAVSGERRLTASRDSTTYDLTSADADLRTFGDLARVASIARTSVDRLAAELTEDADVVDDAFVDRHATVPVDAEEIWAAGVTYQISEQAREEESSMPDMYFDVYDADRPEVFFKATPSRTVEPGDAIGVRGDSEWDVPEPELGIVLRRGEIVGYTVGNDVSSRSIEGENPLYLPQAKVYDRCCSIGPCVVTPEDVEDPHELEMSMTIERDGEVIYDDATNTSEMVRSCDELVSYFTRHNTVPELAVILTGTSLVPEQPFDLQEGDHVDITIEGIGTLSNSVTTV.

Positions 144, 146, and 164 each coordinate Mg(2+).

The protein belongs to the FAH family.

It carries out the reaction 2-dehydro-3-deoxy-D-arabinonate = 2,5-dioxopentanoate + H2O. Its pathway is carbohydrate metabolism; D-xylose degradation. Functionally, probable 2-keto-3-deoxyxylonate dehydratase involved in the degradation of D-xylose, a major component of hemicelluloses such as xylan. Catalyzes the fourth reaction in the xylose utilization pathway through dehydratation of 2-dehydro-3-deoxy-D-xylonate into alpha-ketoglutarate semialdehyde (2,5-dioxopentanoate). The chain is Probable 2-keto-3-deoxyxylonate dehydratase from Haloferax volcanii (strain ATCC 29605 / DSM 3757 / JCM 8879 / NBRC 14742 / NCIMB 2012 / VKM B-1768 / DS2) (Halobacterium volcanii).